Here is a 473-residue protein sequence, read N- to C-terminus: ATP synthase subunit beta 2 (473 aa).

158-165 is an ATP binding site; the sequence is GGAGVGKT.

This sequence belongs to the ATPase alpha/beta chains family. In terms of assembly, F-type ATPases have 2 components, CF(1) - the catalytic core - and CF(0) - the membrane proton channel. CF(1) has five subunits: alpha(3), beta(3), gamma(1), delta(1), epsilon(1). CF(0) has three main subunits: a(1), b(2) and c(9-12). The alpha and beta chains form an alternating ring which encloses part of the gamma chain. CF(1) is attached to CF(0) by a central stalk formed by the gamma and epsilon chains, while a peripheral stalk is formed by the delta and b chains.

The protein localises to the cell membrane. It catalyses the reaction ATP + H2O + 4 H(+)(in) = ADP + phosphate + 5 H(+)(out). Functionally, produces ATP from ADP in the presence of a proton gradient across the membrane. The catalytic sites are hosted primarily by the beta subunits. This Listeria monocytogenes serotype 4b (strain F2365) protein is ATP synthase subunit beta 2.